A 98-amino-acid chain; its full sequence is Alpha-elicitin hibernalin (98 aa).

3 cysteine pairs are disulfide-bonded: cysteine 3-cysteine 71, cysteine 27-cysteine 56, and cysteine 51-cysteine 95.

It is found in the secreted. In terms of biological role, induces local and distal defense responses (incompatible hypersensitive reaction) in plants from the solanaceae and cruciferae families. Elicits leaf necrosis and causes the accumulation of pathogenesis-related proteins. Might interact with the lipidic molecules of the plasma membrane. This chain is Alpha-elicitin hibernalin, found in Phytophthora hibernalis.